The chain runs to 252 residues: Small ribosomal subunit protein uS2A (252 aa).

Ser-2 bears the N-acetylserine mark. The interval 209 to 252 is disordered; sequence EVEQQAAEETTSTGADAEESKEEVAEGQNEASEWAEENTEAVSW. The span at 241 to 252 shows a compositional bias: acidic residues; it reads EWAEENTEAVSW.

Belongs to the universal ribosomal protein uS2 family. Component of the small ribosomal subunit. Mature ribosomes consist of a small (40S) and a large (60S) subunit. The 40S subunit contains about 33 different proteins and 1 molecule of RNA (18S). The 60S subunit contains about 49 different proteins and 3 molecules of RNA (25S, 5.8S and 5S). Interacts with RPS21.

The protein resides in the cytoplasm. Functionally, required for the assembly and/or stability of the 40S ribosomal subunit. Required for the processing of the 20S rRNA-precursor to mature 18S rRNA in a late step of the maturation of 40S ribosomal subunits. This Vanderwaltozyma polyspora (strain ATCC 22028 / DSM 70294 / BCRC 21397 / CBS 2163 / NBRC 10782 / NRRL Y-8283 / UCD 57-17) (Kluyveromyces polysporus) protein is Small ribosomal subunit protein uS2A.